The following is a 341-amino-acid chain: Phenylalanine--tRNA ligase alpha subunit (341 aa).

E254 serves as a coordination point for Mg(2+).

It belongs to the class-II aminoacyl-tRNA synthetase family. Phe-tRNA synthetase alpha subunit type 1 subfamily. Tetramer of two alpha and two beta subunits. The cofactor is Mg(2+).

Its subcellular location is the cytoplasm. The enzyme catalyses tRNA(Phe) + L-phenylalanine + ATP = L-phenylalanyl-tRNA(Phe) + AMP + diphosphate + H(+). This Chlorobium phaeovibrioides (strain DSM 265 / 1930) (Prosthecochloris vibrioformis (strain DSM 265)) protein is Phenylalanine--tRNA ligase alpha subunit.